The following is a 430-amino-acid chain: UDP-N-acetylglucosamine 1-carboxyvinyltransferase 1 (430 aa).

Phosphoenolpyruvate is bound at residue 22 to 23 (KN). Arg-93 is a UDP-N-acetyl-alpha-D-glucosamine binding site. The active-site Proton donor is the Cys-117. Cys-117 carries the post-translational modification 2-(S-cysteinyl)pyruvic acid O-phosphothioketal. Residues 122-126 (RPVDL), Asp-305, and Val-327 contribute to the UDP-N-acetyl-alpha-D-glucosamine site.

It belongs to the EPSP synthase family. MurA subfamily.

It is found in the cytoplasm. The catalysed reaction is phosphoenolpyruvate + UDP-N-acetyl-alpha-D-glucosamine = UDP-N-acetyl-3-O-(1-carboxyvinyl)-alpha-D-glucosamine + phosphate. It participates in cell wall biogenesis; peptidoglycan biosynthesis. Functionally, cell wall formation. Adds enolpyruvyl to UDP-N-acetylglucosamine. In Listeria innocua serovar 6a (strain ATCC BAA-680 / CLIP 11262), this protein is UDP-N-acetylglucosamine 1-carboxyvinyltransferase 1.